The sequence spans 88 residues: Large ribosomal subunit protein bL31B (88 aa).

This sequence belongs to the bacterial ribosomal protein bL31 family. Type B subfamily. Part of the 50S ribosomal subunit.

This chain is Large ribosomal subunit protein bL31B, found in Pasteurella multocida (strain Pm70).